Reading from the N-terminus, the 113-residue chain is Small ribosomal subunit protein bS6 (113 aa).

It belongs to the bacterial ribosomal protein bS6 family.

Binds together with bS18 to 16S ribosomal RNA. In Flavobacterium johnsoniae (strain ATCC 17061 / DSM 2064 / JCM 8514 / BCRC 14874 / CCUG 350202 / NBRC 14942 / NCIMB 11054 / UW101) (Cytophaga johnsonae), this protein is Small ribosomal subunit protein bS6.